The following is a 1183-amino-acid chain: DNA-directed RNA polymerase subunit beta (1183 aa).

The disordered stretch occupies residues 1155–1183; that stretch reads ADVDEDDVNEHKVNIQQSSIPESQKETTD.

It belongs to the RNA polymerase beta chain family. As to quaternary structure, the RNAP catalytic core consists of 2 alpha, 1 beta, 1 beta' and 1 omega subunit. When a sigma factor is associated with the core the holoenzyme is formed, which can initiate transcription.

The catalysed reaction is RNA(n) + a ribonucleoside 5'-triphosphate = RNA(n+1) + diphosphate. Its function is as follows. DNA-dependent RNA polymerase catalyzes the transcription of DNA into RNA using the four ribonucleoside triphosphates as substrates. This chain is DNA-directed RNA polymerase subunit beta, found in Staphylococcus carnosus (strain TM300).